Reading from the N-terminus, the 368-residue chain is Peptide chain release factor 2 (368 aa).

Q250 is modified (N5-methylglutamine).

It belongs to the prokaryotic/mitochondrial release factor family. Post-translationally, methylated by PrmC. Methylation increases the termination efficiency of RF2.

It is found in the cytoplasm. Peptide chain release factor 2 directs the termination of translation in response to the peptide chain termination codons UGA and UAA. The polypeptide is Peptide chain release factor 2 (Rickettsia africae (strain ESF-5)).